We begin with the raw amino-acid sequence, 251 residues long: MAAHLLIVDALNLIRRIHAVQGSPCVETCQHALDQLIIHSQPTHAVAVFDDDARSSGWRHQRLPDYKAGRPPMPDDLHNEMPALRAAFEQRGVRCWASDGNEADDLAATLALKVTEAGHQATIVSTDKGYCQLLSPGLRIRDYFQKRWLDAPFIEKEFGVLPRQLPDYWGLAGISSSKVPGVAGIGPKSATQLLIQFQNLEGIYAHLDEVPEKWRKKLETHKEMAFLCRDIARLQTDLHIDGNLQQLRLVR.

Residue Asp-104 coordinates Mg(2+). A 5'-3' exonuclease domain is found at 160 to 249 (VLPRQLPDYW…IDGNLQQLRL (90 aa)). Leu-171, Ala-172, Pro-180, Val-182, and Ile-185 together coordinate K(+). The interval 184 to 189 (GIGPKS) is interaction with DNA.

The protein belongs to the Xni family. Mg(2+) serves as cofactor. K(+) is required as a cofactor.

Its function is as follows. Has flap endonuclease activity. During DNA replication, flap endonucleases cleave the 5'-overhanging flap structure that is generated by displacement synthesis when DNA polymerase encounters the 5'-end of a downstream Okazaki fragment. The chain is Flap endonuclease Xni from Salmonella paratyphi A (strain ATCC 9150 / SARB42).